Consider the following 981-residue polypeptide: Mineralocorticoid receptor (981 aa).

The modulating stretch occupies residues 1-603 (METKGYHSLP…STGSSRPSKI (603 aa)). Polar residues predominate over residues 234–258 (SLTCSPSVENRGSRSHSPTHASNVG). Disordered stretches follow at residues 234 to 331 (SLTC…ASTV) and 355 to 376 (AIQD…VPFP). Phosphoserine occurs at positions 250, 259, 283, 287, and 299. Low complexity-rich tracts occupy residues 259–300 (SPLS…VSSP) and 309–327 (SVSS…SSPT). Cys604, Cys607, Cys621, Cys624, Cys640, Cys646, Cys656, and Cys659 together coordinate Zn(2+). 2 NR C4-type zinc fingers span residues 604 to 624 (CLVC…CGSC) and 640 to 664 (CAGR…LQKC). The segment at residues 604–669 (CLVCGDEASG…RLQKCLQAGM (66 aa)) is a DNA-binding region (nuclear receptor). The tract at residues 670 to 722 (NLGARKSKKLGKLKGLHEEQPQQPPPPPPQSPEEGTTYIAPTKEPSVNSALVP) is hinge. The tract at residues 684 to 710 (GLHEEQPQQPPPPPPQSPEEGTTYIAP) is disordered. The span at 691–700 (QQPPPPPPQS) shows a compositional bias: pro residues. The region spanning 723-961 (QLTSITHALT…EFPAMLVEII (239 aa)) is the NR LBD domain. 21-hydroxyprogesterone is bound by residues Asn767 and Gln773. Aldosterone is bound by residues Asn767 and Gln773. Residues Asn767 and Gln773 each coordinate progesterone. The interval 779–782 (KWAK) is important for coactivator binding. Positions 814 and 942 each coordinate 21-hydroxyprogesterone. 2 residues coordinate aldosterone: Arg814 and Thr942. Progesterone is bound by residues Arg814 and Thr942.

The protein belongs to the nuclear hormone receptor family. NR3 subfamily. As to quaternary structure, heteromultimeric cytoplasmic complex with HSP90, HSP70, and FKBP4, in the absence of ligand. After ligand binding, it translocates to the nucleus and binds to DNA as a homodimer and as a heterodimer with NR3C1. Binds the coactivator NCOA2. May interact with HSD11B2 in the absence of ligand. Binds the coactivators NCOA1, TIF1 and NRIP1. In terms of processing, phosphorylated. In terms of tissue distribution, detected in liver, brain, heart, kidney, colon, aorta, hippocampus, hypothalamus and adrenal fasciculata.

It is found in the cytoplasm. It localises to the nucleus. The protein localises to the endoplasmic reticulum membrane. Receptor for both mineralocorticoids (MC) such as aldosterone and glucocorticoids (GC) such as corticosterone or cortisol. Binds to mineralocorticoid response elements (MRE) and transactivates target genes. The effect of MC is to increase ion and water transport and thus raise extracellular fluid volume and blood pressure and lower potassium levels. The sequence is that of Mineralocorticoid receptor (Nr3c2) from Rattus norvegicus (Rat).